Consider the following 366-residue polypeptide: Ribosomal RNA large subunit methyltransferase M (366 aa).

Residues S188, 221–224, D240, D260, and D277 each bind S-adenosyl-L-methionine; that span reads CPGG. K306 serves as the catalytic Proton acceptor.

Belongs to the class I-like SAM-binding methyltransferase superfamily. RNA methyltransferase RlmE family. RlmM subfamily. In terms of assembly, monomer.

Its subcellular location is the cytoplasm. It catalyses the reaction cytidine(2498) in 23S rRNA + S-adenosyl-L-methionine = 2'-O-methylcytidine(2498) in 23S rRNA + S-adenosyl-L-homocysteine + H(+). Its function is as follows. Catalyzes the 2'-O-methylation at nucleotide C2498 in 23S rRNA. The sequence is that of Ribosomal RNA large subunit methyltransferase M from Escherichia coli O139:H28 (strain E24377A / ETEC).